We begin with the raw amino-acid sequence, 292 residues long: Ribosomal protein L11 methyltransferase (292 aa).

Residues threonine 136, glycine 159, aspartate 181, and asparagine 228 each contribute to the S-adenosyl-L-methionine site.

Belongs to the methyltransferase superfamily. PrmA family.

It localises to the cytoplasm. The catalysed reaction is L-lysyl-[protein] + 3 S-adenosyl-L-methionine = N(6),N(6),N(6)-trimethyl-L-lysyl-[protein] + 3 S-adenosyl-L-homocysteine + 3 H(+). Methylates ribosomal protein L11. This is Ribosomal protein L11 methyltransferase from Rhizobium leguminosarum bv. trifolii (strain WSM2304).